The primary structure comprises 1108 residues: AP-3 complex subunit beta (1108 aa).

HEAT repeat units follow at residues 90–127 (DSAL…IDII), 327–363 (IEAQ…LRPS), 397–433 (ENIG…STVP), and 434–471 (DVTE…LNAT). The segment covering 480 to 490 (KEKEKEKDVKE) has biased composition (basic and acidic residues). 3 disordered regions span residues 480–501 (KEKE…HSSS), 736–797 (DEEE…YDGE), and 811–835 (LFGI…GEEE). Acidic residues-rich tracts occupy residues 736–764 (DEEE…EDFF) and 780–797 (YDED…YDGE).

The protein belongs to the adaptor complexes large subunit family. Adaptor protein complex 3 (AP-3) is a heterotetramer composed of two large adaptins (delta-type subunit and beta-type subunit), a medium adaptin (mu-type subunit) and a small adaptin (sigma-type subunit).

It is found in the endosome membrane. Part of the AP-3 complex, an adaptor-related complex which is essential for the compartmentalization of the endocytic pathway. The polypeptide is AP-3 complex subunit beta (ap3b-1) (Dictyostelium discoideum (Social amoeba)).